The sequence spans 355 residues: UDP-N-acetylglucosamine--N-acetylmuramyl-(pentapeptide) pyrophosphoryl-undecaprenol N-acetylglucosamine transferase (355 aa).

Residues 15 to 17 (TGG), Asn127, Arg163, Ser191, Ile244, 263 to 268 (ALTVSE), and Gln288 each bind UDP-N-acetyl-alpha-D-glucosamine.

This sequence belongs to the glycosyltransferase 28 family. MurG subfamily.

The protein localises to the cell inner membrane. The catalysed reaction is di-trans,octa-cis-undecaprenyl diphospho-N-acetyl-alpha-D-muramoyl-L-alanyl-D-glutamyl-meso-2,6-diaminopimeloyl-D-alanyl-D-alanine + UDP-N-acetyl-alpha-D-glucosamine = di-trans,octa-cis-undecaprenyl diphospho-[N-acetyl-alpha-D-glucosaminyl-(1-&gt;4)]-N-acetyl-alpha-D-muramoyl-L-alanyl-D-glutamyl-meso-2,6-diaminopimeloyl-D-alanyl-D-alanine + UDP + H(+). The protein operates within cell wall biogenesis; peptidoglycan biosynthesis. In terms of biological role, cell wall formation. Catalyzes the transfer of a GlcNAc subunit on undecaprenyl-pyrophosphoryl-MurNAc-pentapeptide (lipid intermediate I) to form undecaprenyl-pyrophosphoryl-MurNAc-(pentapeptide)GlcNAc (lipid intermediate II). The sequence is that of UDP-N-acetylglucosamine--N-acetylmuramyl-(pentapeptide) pyrophosphoryl-undecaprenol N-acetylglucosamine transferase from Salmonella paratyphi B (strain ATCC BAA-1250 / SPB7).